The following is a 176-amino-acid chain: GTP-dependent dephospho-CoA kinase (176 aa).

Positions 47, 48, 66, and 125 each coordinate GTP.

It belongs to the GTP-dependent DPCK family.

It catalyses the reaction 3'-dephospho-CoA + GTP = GDP + CoA + H(+). It participates in cofactor biosynthesis; coenzyme A biosynthesis. Its function is as follows. Catalyzes the GTP-dependent phosphorylation of the 3'-hydroxyl group of dephosphocoenzyme A to form coenzyme A (CoA). The chain is GTP-dependent dephospho-CoA kinase from Methanocella arvoryzae (strain DSM 22066 / NBRC 105507 / MRE50).